The sequence spans 951 residues: Glycine dehydrogenase (decarboxylating) 1 (951 aa).

Lys-703 is modified (N6-(pyridoxal phosphate)lysine).

It belongs to the GcvP family. As to quaternary structure, the glycine cleavage system is composed of four proteins: P, T, L and H. Pyridoxal 5'-phosphate serves as cofactor.

The catalysed reaction is N(6)-[(R)-lipoyl]-L-lysyl-[glycine-cleavage complex H protein] + glycine + H(+) = N(6)-[(R)-S(8)-aminomethyldihydrolipoyl]-L-lysyl-[glycine-cleavage complex H protein] + CO2. In terms of biological role, the glycine cleavage system catalyzes the degradation of glycine. The P protein binds the alpha-amino group of glycine through its pyridoxal phosphate cofactor; CO(2) is released and the remaining methylamine moiety is then transferred to the lipoamide cofactor of the H protein. The protein is Glycine dehydrogenase (decarboxylating) 1 of Pseudomonas fluorescens (strain ATCC BAA-477 / NRRL B-23932 / Pf-5).